A 447-amino-acid chain; its full sequence is MTAHEVNFDGLVGLTHHYAGLSFGNEASTRHRFQMSNPRLAVKQGLLKMKALADAGFPQAVIPPHERPFIPALRQLGFTGSDEQILDKVARQAPRWLSSVSSASPMWVANAATVCPSADALDGKVHLTVANLNNKFHRALEVPVTEALLRAIFRDESQFSVHSALPQVALLGDEGAANHNRLGGEYGSAGVQLFVYGREEENEIRPARYPARQSREASEAVARLNQVNPQQVIFAQQNPEVIDQGVFHNDVIAVSNRQVLFCHEAAFARQKVLINQLRTRVDGFMAIEVPAGEVSVSDAVATYLFNSQLLSRDDGSMLLVLPRECQDHAGVWRYLNKLVAEDNPISAMQVFDLRESMANGGGPACLRLRVVLTEEERRAVNPAVMMNDALFTALNAWADRYYRDRLTAADLADPLLLREGREALDVLTRLLDLGSVYPFQQTGAADG.

Substrate contacts are provided by residues 19 to 28 (AGLSFGNEAS), Asn-110, and 137 to 138 (HR). Glu-174 is an active-site residue. Substrate is bound at residue Arg-212. Residue His-248 is part of the active site. Residues Asp-250 and Asn-359 each contribute to the substrate site. The active-site Nucleophile is the Cys-365.

Belongs to the succinylarginine dihydrolase family. As to quaternary structure, homodimer.

It carries out the reaction N(2)-succinyl-L-arginine + 2 H2O + 2 H(+) = N(2)-succinyl-L-ornithine + 2 NH4(+) + CO2. It functions in the pathway amino-acid degradation; L-arginine degradation via AST pathway; L-glutamate and succinate from L-arginine: step 2/5. Catalyzes the hydrolysis of N(2)-succinylarginine into N(2)-succinylornithine, ammonia and CO(2). In Salmonella paratyphi B (strain ATCC BAA-1250 / SPB7), this protein is N-succinylarginine dihydrolase.